The chain runs to 306 residues: Embryogenic cell protein 40 (306 aa).

3 disordered regions span residues 1 to 57 (MADL…ASHG), 80 to 171 (AATH…GGLG), and 188 to 306 (GTGI…PTSH). Over residues 12–23 (IQLTDQHGNPVQ) the composition is skewed to polar residues. Positions 32-44 (VHITGVATTGATT) are enriched in low complexity. Gly residues-rich tracts occupy residues 85–119 (GSHG…GTGT), 127–151 (GPTG…GTGV), and 159–171 (GPTG…GGLG). Residues 194–204 (GSAPASAGSHS) are compositionally biased toward low complexity. Basic and acidic residues-rich tracts occupy residues 205 to 218 (HAPE…EQLH) and 243 to 259 (KIKE…DEHT). The span at 260 to 278 (TVATTKTTTAAHPGGAAVA) shows a compositional bias: low complexity. Residues 279–298 (VEHHEHEKKSMLDKIKDKLP) show a composition bias toward basic and acidic residues.

It belongs to the plant dehydrin family.

The protein is Embryogenic cell protein 40 (ECP40) of Daucus carota (Wild carrot).